The sequence spans 251 residues: Flagellar brake protein YcgR (251 aa).

In terms of domain architecture, PilZ spans 127 to 239 (QRRDGFRVRP…ASRTLQRYID (113 aa)).

This sequence belongs to the YcgR family. In terms of assembly, monomer. Interacts with the flagellar basal bodies.

The protein localises to the bacterial flagellum basal body. Functionally, acts as a flagellar brake, regulating swimming and swarming in a bis-(3'-5') cyclic diguanylic acid (c-di-GMP)-dependent manner. Binds 1 c-di-GMP dimer per subunit. Increasing levels of c-di-GMP lead to decreased motility. This chain is Flagellar brake protein YcgR, found in Leptothrix cholodnii (strain ATCC 51168 / LMG 8142 / SP-6) (Leptothrix discophora (strain SP-6)).